The chain runs to 374 residues: MSTEKINLLDFDRKGLRELFAQELGEKAFRADQVMKWIYHFGVDDFDNMTNINKQLREKLKQKCEIVAPVVSEAQHSSDGTIKWAMRVGDQDVETVYIPEEDRATLCVSSQVGCALECKFCSTAQQGFNRNLKVSEIIGQVWRAAREVGLEKETGRRPITNVVMMGMGEPLLNMKNLIPALEIMLDDLGFGLSKRRVTVSTSGVVSGLDQMTGKIDVALAISLHAPNDKLRSEIMPINDRWDIQDFLASVRRYIASSNANRGKVTVEYVLLDHVNDGTEHAHELAQLMKDTPCKINLIPFNPYPGSPYKKPSNSRIDRFQKTLMQYEHTVTIRKTRGDDIDAACGQLVGDVIDRTKRTAMLKAAKGETIEVKAL.

Catalysis depends on E94, which acts as the Proton acceptor. In terms of domain architecture, Radical SAM core spans 100–339 (EEDRATLCVS…VTIRKTRGDD (240 aa)). C107 and C344 are oxidised to a cystine. Positions 114, 118, and 121 each coordinate [4Fe-4S] cluster. S-adenosyl-L-methionine is bound by residues 168–169 (GE), S200, 222–224 (SLH), and N301. Catalysis depends on C344, which acts as the S-methylcysteine intermediate.

The protein belongs to the radical SAM superfamily. RlmN family. [4Fe-4S] cluster serves as cofactor.

The protein resides in the cytoplasm. The enzyme catalyses adenosine(2503) in 23S rRNA + 2 reduced [2Fe-2S]-[ferredoxin] + 2 S-adenosyl-L-methionine = 2-methyladenosine(2503) in 23S rRNA + 5'-deoxyadenosine + L-methionine + 2 oxidized [2Fe-2S]-[ferredoxin] + S-adenosyl-L-homocysteine. It catalyses the reaction adenosine(37) in tRNA + 2 reduced [2Fe-2S]-[ferredoxin] + 2 S-adenosyl-L-methionine = 2-methyladenosine(37) in tRNA + 5'-deoxyadenosine + L-methionine + 2 oxidized [2Fe-2S]-[ferredoxin] + S-adenosyl-L-homocysteine. Its function is as follows. Specifically methylates position 2 of adenine 2503 in 23S rRNA and position 2 of adenine 37 in tRNAs. m2A2503 modification seems to play a crucial role in the proofreading step occurring at the peptidyl transferase center and thus would serve to optimize ribosomal fidelity. In Vibrio vulnificus (strain YJ016), this protein is Dual-specificity RNA methyltransferase RlmN.